The chain runs to 165 residues: Sorting nexin-12 (165 aa).

Residues 1–20 are disordered; the sequence is MSDTAVADTRRLNSKPQDLT. Residue S2 is modified to N-acetylserine. Y23 carries the post-translational modification Phosphotyrosine. The PX domain occupies 28-151; sequence NFLEIDIFNP…HMFLQEEAID (124 aa). 4 residues coordinate a 1,2-diacyl-sn-glycero-3-phospho-(1D-myo-inositol-3-phosphate): R71, S73, K96, and R118. S73 carries the post-translational modification Phosphoserine.

This sequence belongs to the sorting nexin family.

The protein resides in the membrane. In terms of biological role, may be involved in several stages of intracellular trafficking. In Mus musculus (Mouse), this protein is Sorting nexin-12 (Snx12).